Here is a 263-residue protein sequence, read N- to C-terminus: Small ribosomal subunit protein eS4 (263 aa).

The 63-residue stretch at 42-104 (LPLIIFLRNR…TGEHFRLVYD (63 aa)) folds into the S4 RNA-binding domain.

This sequence belongs to the eukaryotic ribosomal protein eS4 family.

The chain is Small ribosomal subunit protein eS4 (RPS4) from Gallus gallus (Chicken).